The following is a 228-amino-acid chain: MDYESKYFKWLGYEETVRLQKEISEKIIKEDAFKNLRYVGGVDTSSIEDKIAGVIVVLEFNTLEVLEVSIEISQVNFPYIPGFLSFREGPIILKAWENLKIKPDLLIFDGQGIAHPRRLGIASHVGYVLDVPSIGCAKKILVGVYKEPDKKRGSFEYIYIDNEIVGAVVRTKDNVKPVFVSLGHKISLSTSIEIILKTSTKYRLPEPVRLAHIYSKKALNFEIKGELL.

Residues aspartate 43 and aspartate 109 each coordinate Mg(2+).

Belongs to the endonuclease V family. Mg(2+) serves as cofactor.

The protein localises to the cytoplasm. It carries out the reaction Endonucleolytic cleavage at apurinic or apyrimidinic sites to products with a 5'-phosphate.. In terms of biological role, DNA repair enzyme involved in the repair of deaminated bases. Selectively cleaves double-stranded DNA at the second phosphodiester bond 3' to a deoxyinosine leaving behind the intact lesion on the nicked DNA. This chain is Endonuclease V, found in Dictyoglomus thermophilum (strain ATCC 35947 / DSM 3960 / H-6-12).